The primary structure comprises 301 residues: 2-oxo-3-(phosphooxy)propyl 3-oxoalkanoate synthase (301 aa).

It belongs to the AfsA family.

It carries out the reaction a medium-chain 3-oxoacyl-[ACP] + dihydroxyacetone phosphate = a (4-alkanoyl-5-oxo-2,5-dihydrofuran-3-yl)methyl phosphate + holo-[ACP] + H2O. Functionally, involved in the biosynthesis of A factor (2-isocapryloyl-3R-hydroxymethyl-gamma-butyrolactone), a gamma-butyrolactone autoregulator that triggers secondary metabolism and morphogenesis in Streptomyces. Catalyzes beta-ketoacyl transfer from 8-methyl-3-oxononanoyl-acyl carrier protein (ACP) to the hydroxyl group of dihydroxyacetone phosphate (DHAP), thus producing an 8-methyl-3-oxononanoyl-DHAP ester. The polypeptide is 2-oxo-3-(phosphooxy)propyl 3-oxoalkanoate synthase (Streptomyces griseus).